The chain runs to 163 residues: MITTGRVWKFWDNVSTDEITPGRYNLTKDPQELARIAFIEVRPEFAEKVRRGDVVVGGKNFGIGSSRESAALALKAAGVSGIIAKSFGRIFYRNAVNLGIPLLIGDTDELEDGDVITVNWETGEVRKNGQTLQFEPLPGFLLEIVREGGILEFIRRRGDLCIG.

This sequence belongs to the LeuD family. LeuD type 2 subfamily. In terms of assembly, heterodimer of LeuC and LeuD.

The enzyme catalyses (2R,3S)-3-isopropylmalate = (2S)-2-isopropylmalate. It participates in amino-acid biosynthesis; L-leucine biosynthesis; L-leucine from 3-methyl-2-oxobutanoate: step 2/4. In terms of biological role, catalyzes the isomerization between 2-isopropylmalate and 3-isopropylmalate, via the formation of 2-isopropylmaleate. The protein is 3-isopropylmalate dehydratase small subunit 2 (leuD2) of Pyrococcus abyssi (strain GE5 / Orsay).